A 528-amino-acid polypeptide reads, in one-letter code: Pentatricopeptide repeat-containing protein At1g62914, mitochondrial (528 aa).

A mitochondrion-targeting transit peptide spans 1 to 20 (MLAKISSSAKRFVHRSLVVR). 13 PPR repeats span residues 77-111 (SIIEFSKLLSAIAKMNKFDLVISFGEKMEILGISH), 112-146 (NLYTYNILINCFCRCSRLSLALALLGKMMKLGYEP), 147-181 (DIVTLNSLLNGFCHGNRISDAVALVDQMVEMGYKP), 182-216 (DTVTFTTLIHGLFLHNKASEAVALIDRMVQRGCQP), 217-251 (DLVTYGAVVNGLCKRGDTDLALNLLNKMEAAKIEA), 252-286 (NVVIYSTVIDSLCKYRHEDDALNLFTEMENKGVRP), 287-321 (NVITYSSLISCLCNYGRWSDASRLLSDMIERKINP), 322-356 (NLVTFSALIDAFVKKGKLVKAEKLYEEMIKRSIDP), 357-391 (NIFTYSSLINGFCMLDRLGEAKQMLELMIRKDCLP), 392-426 (NVVTYNTLINGFCKAKRVDKGMELFREMSQRGLVG), 427-461 (NTVTYTTLIHGFFQARDCDNAQMVFKQMVSVGVHP), 462-496 (NILTYNILLDGLCKNGKLAKAMVVFEYLQRSTMEP), and 497-528 (DIYTYNIMIEGMCKAGKWKMGGIYFVASALKE).

It belongs to the PPR family. P subfamily.

It is found in the mitochondrion. In Arabidopsis thaliana (Mouse-ear cress), this protein is Pentatricopeptide repeat-containing protein At1g62914, mitochondrial.